Reading from the N-terminus, the 180-residue chain is Putative pre-16S rRNA nuclease (180 aa).

The segment covering 1–12 has biased composition (basic and acidic residues); sequence MDAQERSERPDP. The tract at residues 1–23 is disordered; that stretch reads MDAQERSERPDPATDPGRGRRLG.

Belongs to the YqgF nuclease family.

It localises to the cytoplasm. Its function is as follows. Could be a nuclease involved in processing of the 5'-end of pre-16S rRNA. This chain is Putative pre-16S rRNA nuclease, found in Nocardia farcinica (strain IFM 10152).